A 609-amino-acid chain; its full sequence is Autophagy-related protein 22-1 (609 aa).

4 helical membrane passes run 35 to 55 (YGWA…PITL), 117 to 137 (TASF…ILII), 151 to 171 (LLLM…LGVV), and 176 to 196 (MVGA…FVLL). Residues 214-231 (AREPRPALDDSRAQEGHS) are compositionally biased toward basic and acidic residues. Residues 214-240 (AREPRPALDDSRAQEGHSDTTNGIEHG) form a disordered region. N-linked (GlcNAc...) asparagine glycosylation is present at asparagine 244. Residues 287 to 307 (IGIGYIGAIILQIVCILVVIA) form a helical membrane-spanning segment. Residue asparagine 309 is glycosylated (N-linked (GlcNAc...) asparagine). 3 helical membrane passes run 317 to 337 (LVLF…ALWL), 381 to 401 (ILLF…VSGT), and 415 to 435 (AALG…AFSW). The N-linked (GlcNAc...) asparagine glycan is linked to asparagine 443. The next 4 membrane-spanning stretches (helical) occupy residues 450–470 (IIAC…GFIP), 477–497 (FLGL…GLVM), 522–542 (ALYA…VGII), and 552–572 (AFVF…LVDV).

The protein belongs to the ATG22 family.

It is found in the vacuole membrane. Vacuolar effluxer which mediate the efflux of amino acids resulting from autophagic degradation. The release of autophagic amino acids allows the maintenance of protein synthesis and viability during nitrogen starvation. In Aspergillus fumigatus (strain ATCC MYA-4609 / CBS 101355 / FGSC A1100 / Af293) (Neosartorya fumigata), this protein is Autophagy-related protein 22-1 (atg22-1).